The chain runs to 76 residues: Putative small nuclear ribonucleoprotein G-like protein 15 (76 aa).

A Sm domain is found at 4 to 76 (AHPPELKKFT…IIMLEALERV (73 aa)).

It belongs to the snRNP Sm proteins family.

It localises to the nucleus. Its function is as follows. Associated with snRNP U1, U2, U4/U6 and U5. This Homo sapiens (Human) protein is Putative small nuclear ribonucleoprotein G-like protein 15 (SNRPGP15).